Consider the following 246-residue polypeptide: Small ribosomal subunit protein uS2 (246 aa).

This sequence belongs to the universal ribosomal protein uS2 family.

The sequence is that of Small ribosomal subunit protein uS2 from Azotobacter vinelandii (strain DJ / ATCC BAA-1303).